Here is a 388-residue protein sequence, read N- to C-terminus: MAYSARLRKAVGAVRTTLSAVELCDVQAPEFAQHGDHAVASDAPLVLVACSGGRDSMALAAVSHIVCTSMGVRCGVVIVDHGLQEGSEQVAGEAANRCRALGLGPVIVRNATVQARGEGLEAAARQARYNELCAAARESGAIAVLLAHTMDDQAETVLIGLLRSRGVDALAGMPQVFTRSGVTFARPLLTLTRAETTGICEDLGVEYWDDPTNGDAVDGELPNDYPLRSRVRHDLLPAIERFAGFNVTRHFAESARLARMDKEYLDQRSDEVMGEAVTTVDWPASSAAVSTDTPRACAAGDTNDSSHGVGLMISVRRIAREPEAIRLRVIAHALSQAGVNASAAQIAAIDRLVVDWHGQGGVSLPRGYSANRKKHVIRVCQDGAHANR.

Serine 51–serine 56 contributes to the ATP binding site.

It belongs to the tRNA(Ile)-lysidine synthase family.

It is found in the cytoplasm. It carries out the reaction cytidine(34) in tRNA(Ile2) + L-lysine + ATP = lysidine(34) in tRNA(Ile2) + AMP + diphosphate + H(+). Its function is as follows. Ligates lysine onto the cytidine present at position 34 of the AUA codon-specific tRNA(Ile) that contains the anticodon CAU, in an ATP-dependent manner. Cytidine is converted to lysidine, thus changing the amino acid specificity of the tRNA from methionine to isoleucine. This is tRNA(Ile)-lysidine synthase from Bifidobacterium longum (strain DJO10A).